We begin with the raw amino-acid sequence, 555 residues long: WRKY transcription factor WRKY24 (555 aa).

Disordered stretches follow at residues 38 to 65 (GGGGVSRYKAMTPPSLPLSPPPVSPSSF) and 132 to 248 (QTAP…CTFP). A compositionally biased stretch (pro residues) spans 51-61 (PSLPLSPPPVS). Residues 163–194 (QQQQQPWGYQQQPAGMDAGANAASFGAAPFQA) are compositionally biased toward low complexity. Residues 214–278 (SQRRSSDDGY…YKGTHNHAKP (65 aa)) constitute a DNA-binding region (WRKY 1). Residues 253–259 (KKKVERS) carry the Nuclear localization signal motif. The tract at residues 270–367 (KGTHNHAKPQ…EGISMAGNRT (98 aa)) is disordered. Composition is skewed to polar residues over residues 277-294 (KPQNTRRNSGSSAAQVLQ) and 310-320 (TAATPENSSAS). Residues 347–356 (DSKRWRKDGD) are compositionally biased toward basic and acidic residues. A DNA-binding region (WRKY 2) is located at residues 379–444 (SDIDILDDGY…YEGKHNHDVP (66 aa)). The interval 466 to 555 (HPYLPNQPPP…DDMFFQNSLY (90 aa)) is transcription repression of gibberellic acid (GA)-induced promoters. 2 disordered regions span residues 471–498 (NQPPPMSYQPTGPQPYALRPDGFGGQGP) and 513–555 (GFDD…NSLY).

The protein belongs to the WRKY group II-a family. Expressed in aleurone cells. Mostly expressed in aleurone layers and leaves, and, to a lower extent, in roots, panicles and embryos.

It localises to the nucleus. Functionally, transcription repressor. Interacts specifically with the W box (5'-(T)TGAC[CT]-3'), a frequently occurring elicitor-responsive cis-acting element. Negative regulator of both gibberellic acid (GA) and abscisic acid (ABA) signaling in aleurone cells, probably by interfering with GAM1, via the specific repression of GA- and ABA-induced promoters. The protein is WRKY transcription factor WRKY24 of Oryza sativa subsp. indica (Rice).